The following is a 251-amino-acid chain: Probable transcriptional regulatory protein PMI1113 (251 aa).

The protein belongs to the TACO1 family.

The protein localises to the cytoplasm. This chain is Probable transcriptional regulatory protein PMI1113, found in Proteus mirabilis (strain HI4320).